The primary structure comprises 1812 residues: Protein virilizer homolog (1812 aa).

A2 is modified (N-acetylalanine). Disordered stretches follow at residues 132-302 and 576-596; these read ISHD…EQIS and KTSS…GLER. 2 positions are modified to phosphoserine: S133 and S138. Residues 139-152 show a composition bias toward pro residues; it reads PPPPPPPPPPPQPQ. The segment covering 160–169 has biased composition (basic and acidic residues); the sequence is KHADGEKEDQ. S173 carries the post-translational modification Phosphoserine. Positions 174-190 are enriched in pro residues; sequence PPRPQPRGPRTPPGPPP. T184 carries the phosphothreonine modification. S222 is subject to Phosphoserine. The span at 224-233 shows a compositional bias: polar residues; it reads DRNSVPQEGQ. Composition is skewed to acidic residues over residues 234–266 and 274–302; these read YSDE…EDED and IPEE…EQIS. The span at 584–596 shows a compositional bias: basic and acidic residues; it reads SEPDHDTDAGLER. A Phosphotyrosine modification is found at Y914. At S1579 the chain carries Phosphoserine. Disordered stretches follow at residues 1616–1635 and 1663–1812; these read HVVP…GIRP and KEVV…SFTR. Residues 1689–1698 are compositionally biased toward gly residues; the sequence is GFSGNRGGRG. T1708 is subject to Phosphothreonine. R1723 carries the post-translational modification Omega-N-methylarginine. Positions 1723–1748 are enriched in polar residues; the sequence is RGSSWSAQNTPRGNYNESRGGQSNFN. At R1741 the chain carries Asymmetric dimethylarginine; alternate. R1741 is subject to Omega-N-methylarginine; alternate. An asymmetric dimethylarginine mark is found at R1773, R1775, and R1793. The span at 1788–1802 shows a compositional bias: gly residues; that stretch reads GSGGSRGKFVSGGSG. Positions 1803-1812 are enriched in basic residues; the sequence is RGRHVRSFTR.

It belongs to the vir family. As to quaternary structure, component of the WMM complex, a N6-methyltransferase complex composed of a catalytic subcomplex, named MAC, and of an associated subcomplex, named MACOM. The MAC subcomplex is composed of METTL3 and METTL14. The MACOM subcomplex is composed of WTAP, ZC3H13, CBLL1/HAKAI, VIRMA, and, in some cases of RBM15 (RBM15 or RBM15B). Interacts with WTAP. Also a component of a MACOM-like complex, named WTAP complex, composed of WTAP, ZC3H13, CBLL1, VIRMA, RBM15, BCLAF1 and THRAP3. Interacts with NUDT21 and CPSF6.

Its subcellular location is the nucleus speckle. The protein resides in the nucleus. It is found in the nucleoplasm. The protein localises to the cytoplasm. In terms of biological role, associated component of the WMM complex, a complex that mediates N6-methyladenosine (m6A) methylation of RNAs, a modification that plays a role in the efficiency of mRNA splicing and RNA processing. Acts as a key regulator of m6A methylation by promoting m6A methylation of mRNAs in the 3'-UTR near the stop codon: recruits the catalytic core components METTL3 and METTL14, thereby guiding m6A methylation at specific sites. Required for mRNA polyadenylation via its role in selective m6A methylation: m6A methylation of mRNAs in the 3'-UTR near the stop codon correlating with alternative polyadenylation (APA). The polypeptide is Protein virilizer homolog (Homo sapiens (Human)).